The chain runs to 101 residues: Urease subunit beta (101 aa).

The protein belongs to the urease beta subunit family. As to quaternary structure, heterotrimer of UreA (gamma), UreB (beta) and UreC (alpha) subunits. Three heterotrimers associate to form the active enzyme.

The protein localises to the cytoplasm. It catalyses the reaction urea + 2 H2O + H(+) = hydrogencarbonate + 2 NH4(+). It participates in nitrogen metabolism; urea degradation; CO(2) and NH(3) from urea (urease route): step 1/1. The sequence is that of Urease subunit beta from Granulibacter bethesdensis (strain ATCC BAA-1260 / CGDNIH1).